A 21-amino-acid polypeptide reads, in one-letter code: Cupiennin-6c (21 aa).

Ser-21 is modified (serine amide).

In terms of tissue distribution, expressed by the venom gland.

The protein localises to the secreted. The polypeptide is Cupiennin-6c (Cupiennius salei (American wandering spider)).